The sequence spans 160 residues: MSIIKKPDLTDPKLRAKLAKGMGHNYYGEPAWPNDLLYLFPVCILGTFACCIGLAVMAPTQMGEPADPFNTPLEILPEWYFFPTFNLLRVLPNKLLGVLAMAAVPAGLITVPFIENVNKFQNPFRRPIASLVFITGFIFAVWFGIGACLPIDKAVSLGYW.

3 helical membrane passes run 36 to 56 (LLYL…GLAV), 95 to 115 (LLGV…PFIE), and 131 to 151 (LVFI…CLPI).

It belongs to the cytochrome b family. PetD subfamily. As to quaternary structure, the 4 large subunits of the cytochrome b6-f complex are cytochrome b6, subunit IV (17 kDa polypeptide, petD), cytochrome f and the Rieske protein, while the 4 small subunits are petG, petL, petM and petN. The complex functions as a dimer.

Its subcellular location is the plastid. It localises to the chloroplast thylakoid membrane. Functionally, component of the cytochrome b6-f complex, which mediates electron transfer between photosystem II (PSII) and photosystem I (PSI), cyclic electron flow around PSI, and state transitions. The chain is Cytochrome b6-f complex subunit 4 from Thalassiosira pseudonana (Marine diatom).